A 311-amino-acid polypeptide reads, in one-letter code: tRNA-cytidine(32) 2-sulfurtransferase (311 aa).

The PP-loop motif signature appears at 47–52; the sequence is SGGKDS. Residues C122, C125, and C213 each contribute to the [4Fe-4S] cluster site.

This sequence belongs to the TtcA family. As to quaternary structure, homodimer. Requires Mg(2+) as cofactor. [4Fe-4S] cluster serves as cofactor.

It localises to the cytoplasm. It catalyses the reaction cytidine(32) in tRNA + S-sulfanyl-L-cysteinyl-[cysteine desulfurase] + AH2 + ATP = 2-thiocytidine(32) in tRNA + L-cysteinyl-[cysteine desulfurase] + A + AMP + diphosphate + H(+). The protein operates within tRNA modification. Functionally, catalyzes the ATP-dependent 2-thiolation of cytidine in position 32 of tRNA, to form 2-thiocytidine (s(2)C32). The sulfur atoms are provided by the cysteine/cysteine desulfurase (IscS) system. The protein is tRNA-cytidine(32) 2-sulfurtransferase of Shigella boydii serotype 4 (strain Sb227).